The following is a 54-amino-acid chain: UPF0391 membrane protein Pnap_0920 (54 aa).

A run of 2 helical transmembrane segments spans residues 6–26 (VVFL…IAAG) and 30–50 (IAKI…VVSL).

It belongs to the UPF0391 family.

It is found in the cell membrane. The protein is UPF0391 membrane protein Pnap_0920 of Polaromonas naphthalenivorans (strain CJ2).